The primary structure comprises 153 residues: Putative pre-16S rRNA nuclease (153 aa).

The protein belongs to the YqgF nuclease family.

It localises to the cytoplasm. Could be a nuclease involved in processing of the 5'-end of pre-16S rRNA. The chain is Putative pre-16S rRNA nuclease from Prochlorococcus marinus (strain AS9601).